The following is a 753-amino-acid chain: Inactive protein-tyrosine phosphatase egg-4 (753 aa).

Disordered stretches follow at residues 26–46 and 75–145; these read TSLQSFCSGNTDDSSADSTDN and SFRK…SGHG. Residues 35 to 46 show a composition bias toward low complexity; the sequence is NTDDSSADSTDN. Basic and acidic residues-rich tracts occupy residues 84 to 94 and 129 to 145; these read AQKDRRSKERL and VSEKPKDEGRREDSGHG. Positions 408-661 constitute a Tyrosine-protein phosphatase domain; that stretch reads MERRFEILEN…IFVHRLVAFF (254 aa).

Belongs to the protein-tyrosine phosphatase family. As to quaternary structure, part of a complex, consisting of pseudophosphatases egg-3, egg-4, egg-5 and kinase mbk-2; this complex is required for the oocyte-to-zygote transition. Interacts (via tyrosine-protein phosphatase domain) with kinase mbk-2 (via 'Tyr-619' and 'Tyr-621'); mbk-2 tyrosine phosphorylation enhances the interaction. The interaction inhibits mbk-2 kinase activity and is required for mbk-2 oocyte cortex localization. Interacts with egg-3.

It localises to the cytoplasm. Its subcellular location is the cell cortex. Its function is as follows. Inactive phosphatase which acts redundantly with egg-5 in the oocyte-to-zygote transition. Required for the polarization of cortical actin cytoskeleton rearrangement in the oocyte before and after fertilization. Together with egg-5, required for the cortical localization of kinase mbk-2 and for the inhibition of mbk-2 kinase activity in maturing oocyte until the end of meiosis I. Also required for kinase mbk-2, pseudophosphatase egg-3 and chitin synthase chs-1 localization to cytoplasmic foci after fertilization. The sequence is that of Inactive protein-tyrosine phosphatase egg-4 from Caenorhabditis elegans.